The sequence spans 173 residues: Putative pre-16S rRNA nuclease (173 aa).

This sequence belongs to the YqgF nuclease family.

It localises to the cytoplasm. Could be a nuclease involved in processing of the 5'-end of pre-16S rRNA. This is Putative pre-16S rRNA nuclease from Psychrobacter cryohalolentis (strain ATCC BAA-1226 / DSM 17306 / VKM B-2378 / K5).